The following is an 807-amino-acid chain: Shutoff protein (807 aa).

The interval 1–88 is disordered; the sequence is MESVEKKDSL…QVGRGDERHG (88 aa). The span at 16-29 shows a compositional bias: polar residues; it reads FATTASTDAANAPT. 2 stretches are compositionally biased toward basic and acidic residues: residues 59–70 and 79–88; these read RSVPTEDKKQDQ and QVGRGDERHG. Positions 280-345 are binding to host EIF4G; that stretch reads VMSELIVRRA…AVLVTVELEC (66 aa). The 119-residue stretch at 348–466 folds into the RRM domain; that stretch reads RFFADPEMQR…DLWTAFNERS (119 aa). Y365 and Y682 each carry phosphotyrosine; by host. The disordered stretch occupies residues 684 to 807; the sequence is DPQSGEELNP…AGTARSPTQP (124 aa). Residues 726 to 743 show a composition bias toward gly residues; that stretch reads GRGGILGQSGRGGFGRGG. Basic and acidic residues predominate over residues 744 to 755; the sequence is GGHDGRLGEPRR. Residues 756–765 are compositionally biased toward basic residues; that stretch reads GSFRGRRGVR.

Belongs to the adenoviridae shutoff protein family. In terms of assembly, monomer. Interacts with hexon protein; this interaction allows chaperoning and trimerization of hexon proteins. Interacts (via N-terminus) with host initiation factor EIF4G (via C-terminus). Interacts (via RRM domain) with viral mRNAs that contain the tripartite leader; this interaction allows ribosome shunting and expression of viral late mRNAs. Might be cleaved by the viral protease. Post-translationally, phosphorylated. Tyrosine phosphorylation enhances preferential binding to tripartite leader mRNAs and allows ribosome shunting. In terms of processing, methylated. Asymmetric dimethylation by host PRMT1 of the Arg/Gly-rich region may regulate shutoff protein binding to hexon and promote the capsid assembly in the nucleus.

It localises to the host cytoplasm. Protein that inhibits host translation while promoting late viral translation by ribosome shunting. Blocks host cap-dependent translation by binding to eIF4G, displacing MKNK1 from cap initiation complexes and preventing EIF4E phosphorylation. Binds to the tripartite leader sequence of viral late mRNAs and recruits host eIF4G, PABPC1/poly-A binding protein and 40S ribosomes subunits on viral mRNAs, allowing ribosome shunting and efficient translation of late viral mRNAs even though conventional translation via ribosome scanning from the cap has been shut off in the host cell. During assembly, acts as a chaperone protein that helps hexon proteins assembly into trimers. This is Shutoff protein from Homo sapiens (Human).